The sequence spans 142 residues: Hemoglobin subunit alpha-A (142 aa).

The Globin domain maps to 2 to 142 (VLSAADKTNV…VGTVLTAKYR (141 aa)). Histidine 59 contributes to the O2 binding site. Residue histidine 88 coordinates heme b.

It belongs to the globin family. Heterotetramer of two alpha chains and two beta chains. In terms of tissue distribution, red blood cells.

Involved in oxygen transport from the lung to the various peripheral tissues. The polypeptide is Hemoglobin subunit alpha-A (HBAA) (Anser indicus (Bar-headed goose)).